Reading from the N-terminus, the 308-residue chain is UPF0026 protein HP_0117 (308 aa).

In terms of domain architecture, Radical SAM core spans 18–248 (FGKSLGVDLS…SLPKRSITQA (231 aa)). 3 residues coordinate [4Fe-4S] cluster: Cys-33, Cys-37, and Cys-40.

Belongs to the UPF0026 family. [4Fe-4S] cluster is required as a cofactor.

This Helicobacter pylori (strain ATCC 700392 / 26695) (Campylobacter pylori) protein is UPF0026 protein HP_0117.